A 176-amino-acid polypeptide reads, in one-letter code: MSQVAPKWYQSEDVPAPKQTRKTARPQKLRASLVPGTVLILLAGRFRGKRVVYLKNLEDNTLLVSGPFKVNGVPLRRVNARYVIATSTKVNVSGVDVSKFNVEYFAREKSSKSKKSEAEFFNESQPKKEIKAERVADQKSVDAALLSEIKKTPLLKQYLAASFSLKNGDRPHLLKF.

The tract at residues Met1–Gln27 is disordered.

The protein belongs to the eukaryotic ribosomal protein eL6 family. In terms of assembly, component of the large ribosomal subunit. Mature ribosomes consist of a small (40S) and a large (60S) subunit. The 40S subunit contains about 32 different proteins and 1 molecule of RNA (18S). The 60S subunit contains 45 different proteins and 3 molecules of RNA (25S, 5.8S and 5S).

The protein resides in the cytoplasm. Functionally, component of the ribosome, a large ribonucleoprotein complex responsible for the synthesis of proteins in the cell. The small ribosomal subunit (SSU) binds messenger RNAs (mRNAs) and translates the encoded message by selecting cognate aminoacyl-transfer RNA (tRNA) molecules. The large subunit (LSU) contains the ribosomal catalytic site termed the peptidyl transferase center (PTC), which catalyzes the formation of peptide bonds, thereby polymerizing the amino acids delivered by tRNAs into a polypeptide chain. The nascent polypeptides leave the ribosome through a tunnel in the LSU and interact with protein factors that function in enzymatic processing, targeting, and the membrane insertion of nascent chains at the exit of the ribosomal tunnel. This Candida albicans (strain SC5314 / ATCC MYA-2876) (Yeast) protein is Large ribosomal subunit protein eL6.